The chain runs to 462 residues: Glycine--tRNA ligase (462 aa).

Substrate contacts are provided by Arg-100 and Glu-174. Residues Arg-206–Glu-208, Phe-216–Phe-221, Glu-290–Leu-291, and Gly-334–Arg-337 each bind ATP. Residue Phe-221 to Glu-225 coordinates substrate. Glu-330–Gly-334 serves as a coordination point for substrate.

It belongs to the class-II aminoacyl-tRNA synthetase family. Homodimer.

It localises to the cytoplasm. It carries out the reaction tRNA(Gly) + glycine + ATP = glycyl-tRNA(Gly) + AMP + diphosphate. In terms of biological role, catalyzes the attachment of glycine to tRNA(Gly). The chain is Glycine--tRNA ligase from Alkaliphilus metalliredigens (strain QYMF).